The chain runs to 151 residues: MQIILLEKVANLGNLGEVVRVRDGYARNFLIPQKKARRATDAALKEFEARRAELEKVQAEKLAAAQALAERLNGFQLKISQKAGVDGRLFGSVTNADVAEGLRKAGFEAVEKSQVRMPNGQIKAVGEYLVQAVLHADVVADVVVLVEGEMA.

It belongs to the bacterial ribosomal protein bL9 family.

Functionally, binds to the 23S rRNA. This Bordetella pertussis (strain Tohama I / ATCC BAA-589 / NCTC 13251) protein is Large ribosomal subunit protein bL9.